A 202-amino-acid chain; its full sequence is Outer-membrane lipoprotein carrier protein (202 aa).

A signal peptide spans 1–18 (MNKLFLILLLIFSHEVFS).

Belongs to the LolA family. In terms of assembly, monomer.

It is found in the periplasm. Functionally, participates in the translocation of lipoproteins from the inner membrane to the outer membrane. Only forms a complex with a lipoprotein if the residue after the N-terminal Cys is not an aspartate (The Asp acts as a targeting signal to indicate that the lipoprotein should stay in the inner membrane). This Legionella pneumophila (strain Corby) protein is Outer-membrane lipoprotein carrier protein.